An 80-amino-acid chain; its full sequence is Large ribosomal subunit protein bL31 (80 aa).

Zn(2+) is bound by residues C16, C18, C36, and C39.

It belongs to the bacterial ribosomal protein bL31 family. Type A subfamily. As to quaternary structure, part of the 50S ribosomal subunit. It depends on Zn(2+) as a cofactor.

Binds the 23S rRNA. This chain is Large ribosomal subunit protein bL31, found in Methylacidiphilum infernorum (isolate V4) (Methylokorus infernorum (strain V4)).